The sequence spans 424 residues: Serine--tRNA ligase (424 aa).

Residue 231-233 coordinates L-serine; the sequence is TAE. 262-264 is a binding site for ATP; that stretch reads RSE. E285 serves as a coordination point for L-serine. Residue 349–352 coordinates ATP; that stretch reads EISS. An L-serine-binding site is contributed by S385.

This sequence belongs to the class-II aminoacyl-tRNA synthetase family. Type-1 seryl-tRNA synthetase subfamily. Homodimer. The tRNA molecule binds across the dimer.

The protein localises to the cytoplasm. It catalyses the reaction tRNA(Ser) + L-serine + ATP = L-seryl-tRNA(Ser) + AMP + diphosphate + H(+). The catalysed reaction is tRNA(Sec) + L-serine + ATP = L-seryl-tRNA(Sec) + AMP + diphosphate + H(+). The protein operates within aminoacyl-tRNA biosynthesis; selenocysteinyl-tRNA(Sec) biosynthesis; L-seryl-tRNA(Sec) from L-serine and tRNA(Sec): step 1/1. Catalyzes the attachment of serine to tRNA(Ser). Is also able to aminoacylate tRNA(Sec) with serine, to form the misacylated tRNA L-seryl-tRNA(Sec), which will be further converted into selenocysteinyl-tRNA(Sec). The polypeptide is Serine--tRNA ligase (Bacillus cereus (strain B4264)).